The sequence spans 83 residues: UPF0512 protein W (83 aa).

It belongs to the UPF0512 family.

This chain is UPF0512 protein W, found in Dictyostelium discoideum (Social amoeba).